We begin with the raw amino-acid sequence, 606 residues long: Scavenger receptor class A member 3 (606 aa).

Residues 1-56 (MKVRSAGGDGDALCVTEEDLAGDDEDMPTFPCTQKGRPGPRCSRCQKNLSLHTSVR) are Cytoplasmic-facing. Residues 57-77 (ILYLFLALLLVAVAVLASLVF) form a helical; Signal-anchor for type II membrane protein membrane-spanning segment. Residues 78-606 (RKVDSLSEDI…PGPPGSQSFY (529 aa)) are Extracellular-facing. Residues N115, N182, N224, N257, N313, N337, N365, N400, N430, and N451 are each glycosylated (N-linked (GlcNAc...) asparagine). The tract at residues 454–606 (ILRGAPGPPG…PGPPGSQSFY (153 aa)) is disordered. The region spanning 455–513 (LRGAPGPPGPRGFKGDMGVKGPVGGRGPKGDPGSLGPLGPQGPQGQPGEAGPVGERGPV) is the Collagen-like 1 domain. Residues 485 to 519 (DPGSLGPLGPQGPQGQPGEAGPVGERGPVGPRGFP) show a composition bias toward low complexity. The segment covering 526 to 535 (GSFGTGGPRG) has biased composition (gly residues). The region spanning 544 to 603 (GPPGPEGPPGSPGPSGPQGKPGIAGKTGSPGQRGAMGPKGEPGIQGPPGLPGPPGPPGSQ) is the Collagen-like 2 domain. Composition is skewed to pro residues over residues 545–558 (PPGP…PGPS) and 591–600 (PGLPGPPGPP).

In terms of tissue distribution, expressed ubiquitously.

It is found in the endoplasmic reticulum membrane. It localises to the golgi apparatus membrane. Functionally, seems to protect cells by scavenging oxidative molecules or harmful products of oxidation. This Homo sapiens (Human) protein is Scavenger receptor class A member 3 (SCARA3).